Here is a 310-residue protein sequence, read N- to C-terminus: MPMQGAQRKLLGSLNSTPTATSNLGLAANRTGAPCLELPIPDGLFLSLGLVSLVENVLVVAAIAKNRNLHSSMYCFICCLALSDLLVSGSNMLEAGVLATRASVVQQLHNTIDVLTCSSMLCSLCFLGAIAVDRYISIFYALRYHSIMTLPRAQRAVAAIWVASVLSSTLFITYYDHAAVLLCLVVFFLAMLVLMAVLYVHMLAWACQHAQGIIRLHKRQPPAHKGFGLRGAATLTILLGIFFLCWGPFFLRLTLVVFCPQHLTCNCIFKNFKVFLTLIICNTIIDPLIYAFRSQELRRTLKEVLGRGRW.

Residues 1-37 (MPMQGAQRKLLGSLNSTPTATSNLGLAANRTGAPCLE) are Extracellular-facing. Asn29 carries N-linked (GlcNAc...) asparagine glycosylation. Residues 38–63 (LPIPDGLFLSLGLVSLVENVLVVAAI) form a helical membrane-spanning segment. Residues 64–72 (AKNRNLHSS) are Cytoplasmic-facing. Residues 73–93 (MYCFICCLALSDLLVSGSNML) form a helical membrane-spanning segment. Topologically, residues 94 to 110 (EAGVLATRASVVQQLHN) are extracellular. A helical transmembrane segment spans residues 111-132 (TIDVLTCSSMLCSLCFLGAIAV). The Cytoplasmic portion of the chain corresponds to 133–155 (DRYISIFYALRYHSIMTLPRAQR). Residues 156–175 (AVAAIWVASVLSSTLFITYY) traverse the membrane as a helical segment. At 176–183 (DHAAVLLC) the chain is on the extracellular side. The helical transmembrane segment at 184-203 (LVVFFLAMLVLMAVLYVHML) threads the bilayer. Residues 204 to 232 (AWACQHAQGIIRLHKRQPPAHKGFGLRGA) are Cytoplasmic-facing. Residues 233–258 (ATLTILLGIFFLCWGPFFLRLTLVVF) traverse the membrane as a helical segment. At 259-271 (CPQHLTCNCIFKN) the chain is on the extracellular side. Residues 272-292 (FKVFLTLIICNTIIDPLIYAF) form a helical membrane-spanning segment. The Cytoplasmic segment spans residues 293–310 (RSQELRRTLKEVLGRGRW).

The protein belongs to the G-protein coupled receptor 1 family. As to quaternary structure, interacts with MGRN1, but does not undergo MGRN1-mediated ubiquitination; this interaction competes with GNAS-binding and thus inhibits agonist-induced cAMP production. Interacts with OPN3; the interaction results in a decrease in MC1R-mediated cAMP signaling and ultimately a decrease in melanin production in melanocytes.

Its subcellular location is the cell membrane. In terms of biological role, receptor for MSH (alpha, beta and gamma) and ACTH. The activity of this receptor is mediated by G proteins which activate adenylate cyclase. Mediates melanogenesis, the production of eumelanin (black/brown) and phaeomelanin (red/yellow), via regulation of cAMP signaling in melanocytes. The sequence is that of Melanocyte-stimulating hormone receptor (MC1R) from Leontopithecus chrysomelas (Golden-headed lion tamarin).